The sequence spans 125 residues: Small ribosomal subunit protein uS12 (125 aa).

The residue at position 89 (aspartate 89) is a 3-methylthioaspartic acid. The interval 100 to 125 (GSLDTQGVQNRKQARSKYGAKRPKKA) is disordered. Over residues 111-125 (KQARSKYGAKRPKKA) the composition is skewed to basic residues.

This sequence belongs to the universal ribosomal protein uS12 family. In terms of assembly, part of the 30S ribosomal subunit. Contacts proteins S8 and S17. May interact with IF1 in the 30S initiation complex.

Functionally, with S4 and S5 plays an important role in translational accuracy. Interacts with and stabilizes bases of the 16S rRNA that are involved in tRNA selection in the A site and with the mRNA backbone. Located at the interface of the 30S and 50S subunits, it traverses the body of the 30S subunit contacting proteins on the other side and probably holding the rRNA structure together. The combined cluster of proteins S8, S12 and S17 appears to hold together the shoulder and platform of the 30S subunit. This chain is Small ribosomal subunit protein uS12, found in Thioalkalivibrio sulfidiphilus (strain HL-EbGR7).